The sequence spans 484 residues: Ferrochelatase-2, chloroplastic (484 aa).

The protein belongs to the ferrochelatase family.

The protein localises to the plastid. Its subcellular location is the chloroplast. It carries out the reaction heme b + 2 H(+) = protoporphyrin IX + Fe(2+). Its pathway is porphyrin-containing compound metabolism; protoheme biosynthesis; protoheme from protoporphyrin-IX: step 1/1. Functionally, catalyzes the ferrous insertion into protoporphyrin IX. This chain is Ferrochelatase-2, chloroplastic (HEMH), found in Hordeum vulgare (Barley).